The sequence spans 610 residues: V-type proton ATPase catalytic subunit A (610 aa).

245-252 (GAFGCGKT) is an ATP binding site.

It belongs to the ATPase alpha/beta chains family. V-ATPase is a heteromultimeric enzyme composed of a peripheral catalytic V1 complex (main components: subunits A, B, C, D, E, and F) attached to an integral membrane V0 proton pore complex (main component: the proteolipid protein).

The catalysed reaction is ATP + H2O + 4 H(+)(in) = ADP + phosphate + 5 H(+)(out). Functionally, catalytic subunit of the peripheral V1 complex of vacuolar ATPase. V-ATPase vacuolar ATPase is responsible for acidifying a variety of intracellular compartments in eukaryotic cells. This is V-type proton ATPase catalytic subunit A from Trypanosoma congolense.